A 660-amino-acid chain; its full sequence is Protein SCARECROW 2 (660 aa).

Disordered stretches follow at residues 1-33 and 190-286; these read MGSS…ITSL and SDPA…KQRD. The span at 192-229 shows a compositional bias: pro residues; that stretch reads PAPPPPPPSHPALLPPDATAPPPPPTSVAALPPPPPAQ. The span at 259–272 shows a compositional bias: low complexity; that stretch reads AAAAAAAAAAAAAA. The stretch at 262–289 forms a coiled coil; sequence AAAAAAAAAAAAKERKEEQRRKQRDEEG. The segment covering 273–286 has biased composition (basic and acidic residues); the sequence is AKERKEEQRRKQRD. A GRAS domain is found at 283–653; sequence KQRDEEGLHL…LCLLTASAWR (371 aa). Residues 290–354 form a leucine repeat I (LRI) region; sequence LHLLTLLLQC…VSSCLGLYAP (65 aa). Residues 297–301 carry the LxCxE motif motif; it reads LQCAE. A VHIID region spans residues 373–438; it reads FQVFNGISPF…GGPPRVRLTG (66 aa). The VHIID motif lies at 404–408; that stretch reads VHIID. Positions 448–480 are leucine repeat II (LRII); sequence ATGKRLSDFADTLGLPFEFCPVADKAGNLDPEK. The interval 489 to 576 is PFYRE; that stretch reads VAVHWLRHSL…QQLLSREIRN (88 aa). Residues 579–653 are SAW; that stretch reads AVGGPARTGD…LCLLTASAWR (75 aa).

Belongs to the GRAS family.

The protein resides in the cytoplasm. Probable transcription factor involved in asmmetric cell division in the cortex/endodermis progenitor cell and in the process of stomata and ligule formation in leaves. This is Protein SCARECROW 2 (SCR2) from Oryza sativa subsp. indica (Rice).